The chain runs to 505 residues: Aspartyl/glutamyl-tRNA(Asn/Gln) amidotransferase subunit B (505 aa).

It belongs to the GatB/GatE family. GatB subfamily. As to quaternary structure, heterotrimer of A, B and C subunits.

The enzyme catalyses L-glutamyl-tRNA(Gln) + L-glutamine + ATP + H2O = L-glutaminyl-tRNA(Gln) + L-glutamate + ADP + phosphate + H(+). The catalysed reaction is L-aspartyl-tRNA(Asn) + L-glutamine + ATP + H2O = L-asparaginyl-tRNA(Asn) + L-glutamate + ADP + phosphate + 2 H(+). In terms of biological role, allows the formation of correctly charged Asn-tRNA(Asn) or Gln-tRNA(Gln) through the transamidation of misacylated Asp-tRNA(Asn) or Glu-tRNA(Gln) in organisms which lack either or both of asparaginyl-tRNA or glutaminyl-tRNA synthetases. The reaction takes place in the presence of glutamine and ATP through an activated phospho-Asp-tRNA(Asn) or phospho-Glu-tRNA(Gln). This Kineococcus radiotolerans (strain ATCC BAA-149 / DSM 14245 / SRS30216) protein is Aspartyl/glutamyl-tRNA(Asn/Gln) amidotransferase subunit B.